The primary structure comprises 160 residues: MLRSIIGKSASRSLNFVAKRSYAEAAAASSGLKLQFALPHETLYSGSEVTQVNLPAKSGRIGVLANHVPTVEQLLPGVVEVMEGSNSKKFFISGGFATVQPDSQLCVTAIEAFPLESFSQENIKNLLAEAKKNVSSSDAREAAEAAIQVEVLENLQSVLK.

The transit peptide at 1–22 directs the protein to the mitochondrion; it reads MLRSIIGKSASRSLNFVAKRSY.

It belongs to the ATPase epsilon chain family. F-type ATPases have 2 components, CF(1) - the catalytic core - and CF(0) - the membrane proton channel. CF(1) has five subunits: alpha(3), beta(3), gamma(1), delta(1), epsilon(1). CF(0) has three main subunits: a, b and c.

It is found in the mitochondrion. The protein resides in the mitochondrion inner membrane. Mitochondrial membrane ATP synthase (F(1)F(0) ATP synthase or Complex V) produces ATP from ADP in the presence of a proton gradient across the membrane which is generated by electron transport complexes of the respiratory chain. F-type ATPases consist of two structural domains, F(1) - containing the extramembraneous catalytic core, and F(0) - containing the membrane proton channel, linked together by a central stalk and a peripheral stalk. During catalysis, ATP turnover in the catalytic domain of F(1) is coupled via a rotary mechanism of the central stalk subunits to proton translocation. Part of the complex F(1) domain and of the central stalk which is part of the complex rotary element. Rotation of the central stalk against the surrounding alpha(3)beta(3) subunits leads to hydrolysis of ATP in three separate catalytic sites on the beta subunits. The polypeptide is ATP synthase subunit delta, mitochondrial (ATP16) (Saccharomyces cerevisiae (strain ATCC 204508 / S288c) (Baker's yeast)).